The following is a 320-amino-acid chain: Pyrroline-5-carboxylate reductase 2 (320 aa).

Serine 2 is modified (N-acetylserine). NADP(+)-binding positions include 6–11 and serine 34; that span reads IGAGQL. Residues alanine 8, glutamine 10, leucine 11, serine 34, glutamate 36, asparagine 56, valine 70, lysine 71, and alanine 97 each coordinate NADPH. NADP(+) is bound by residues asparagine 56, 69–72, and 95–97; these read AVKP and CAA. Residue glutamate 164 coordinates L-proline. Residue asparagine 230 coordinates NADPH. Residues alanine 237 and threonine 238 each coordinate L-proline. Positions 295–305 are enriched in low complexity; sequence PTVSTLTPSSP. The interval 295–320 is disordered; sequence PTVSTLTPSSPGKLLTRSLALGGKKD. Serine 304 bears the Phosphoserine mark.

The protein belongs to the pyrroline-5-carboxylate reductase family. Homodecamer; composed of 5 homodimers. Interacts with LTO1.

Its subcellular location is the cytoplasm. It localises to the mitochondrion. It catalyses the reaction L-proline + NADP(+) = (S)-1-pyrroline-5-carboxylate + NADPH + 2 H(+). The enzyme catalyses L-proline + NAD(+) = (S)-1-pyrroline-5-carboxylate + NADH + 2 H(+). It functions in the pathway amino-acid biosynthesis; L-proline biosynthesis; L-proline from L-glutamate 5-semialdehyde: step 1/1. Oxidoreductase that catalyzes the last step in proline biosynthesis, which corresponds to the reduction of pyrroline-5-carboxylate to L-proline using NAD(P)H. At physiologic concentrations, has higher specific activity in the presence of NADH. Involved in cellular response to oxidative stress. In some cell types, such as erythrocytes, its primary function may be the generation of NADP(+). The protein is Pyrroline-5-carboxylate reductase 2 (PYCR2) of Macaca fascicularis (Crab-eating macaque).